The sequence spans 219 residues: Deoxyribose-phosphate aldolase (219 aa).

Catalysis depends on Asp-92, which acts as the Proton donor/acceptor. Lys-154 functions as the Schiff-base intermediate with acetaldehyde in the catalytic mechanism. Lys-183 serves as the catalytic Proton donor/acceptor.

This sequence belongs to the DeoC/FbaB aldolase family. DeoC type 1 subfamily.

The protein resides in the cytoplasm. The enzyme catalyses 2-deoxy-D-ribose 5-phosphate = D-glyceraldehyde 3-phosphate + acetaldehyde. It participates in carbohydrate degradation; 2-deoxy-D-ribose 1-phosphate degradation; D-glyceraldehyde 3-phosphate and acetaldehyde from 2-deoxy-alpha-D-ribose 1-phosphate: step 2/2. In terms of biological role, catalyzes a reversible aldol reaction between acetaldehyde and D-glyceraldehyde 3-phosphate to generate 2-deoxy-D-ribose 5-phosphate. The polypeptide is Deoxyribose-phosphate aldolase (Dictyoglomus turgidum (strain DSM 6724 / Z-1310)).